Consider the following 175-residue polypeptide: MSLNQVPAGKDLPEDIYVVIEIPANADPIKYEIDKETGSLFVDRFMSTAMFYPCNYGYINNTLSLDGDPVDVLVPTPYPLQPGSVIRCRPVGVLKMTDEAGEDAKLVAVPHSKLTKEYDHVKDVQDLPELLKAQIKHFFEHYKDLETGKWVKVDGWEDAAAAKAEILSSFERAKK.

Residues lysine 30, arginine 44, and tyrosine 56 each contribute to the substrate site. Residues aspartate 66, aspartate 71, and aspartate 103 each contribute to the Mg(2+) site. Tyrosine 142 provides a ligand contact to substrate.

The protein belongs to the PPase family. Homohexamer. Mg(2+) serves as cofactor.

The protein resides in the cytoplasm. The enzyme catalyses diphosphate + H2O = 2 phosphate + H(+). Functionally, catalyzes the hydrolysis of inorganic pyrophosphate (PPi) forming two phosphate ions. In Yersinia pestis, this protein is Inorganic pyrophosphatase.